The following is a 207-amino-acid chain: LexA repressor (207 aa).

The H-T-H motif DNA-binding region spans 28 to 48; the sequence is VREIGEAVGLASSSTVHGHLS. Active-site for autocatalytic cleavage activity residues include Ser-130 and Lys-168.

The protein belongs to the peptidase S24 family. Homodimer.

It catalyses the reaction Hydrolysis of Ala-|-Gly bond in repressor LexA.. In terms of biological role, represses a number of genes involved in the response to DNA damage (SOS response), including recA and lexA. In the presence of single-stranded DNA, RecA interacts with LexA causing an autocatalytic cleavage which disrupts the DNA-binding part of LexA, leading to derepression of the SOS regulon and eventually DNA repair. The sequence is that of LexA repressor from Staphylococcus haemolyticus (strain JCSC1435).